Consider the following 415-residue polypeptide: Sphingomyelin synthase-related protein 1 (415 aa).

Residues 12–78 form the SAM domain; that stretch reads WTTKHVAVWL…MLSVRKLQKI (67 aa). Helical transmembrane passes span 153-173, 201-221, 232-252, and 277-297; these read ILSCIYVFIVFGFTSFIMVIV, FAMTEVCGMILCYIWLLVLLL, LCSLMGTVFLLRCFTMFVTSL, and FAIWSGFGMTLTGVHTCGDYM. H301 is an active-site residue. Residues 322–342 form a helical membrane-spanning segment; that stretch reads FLHTLSWVLNLFGIFFILAAH. Residues H344 and D348 contribute to the active site. The helical transmembrane segment at 347–367 threads the bilayer; the sequence is IDVFIAFYITTRLFLYYHTLA. Over 368-415 the chain is Cytoplasmic; the sequence is NTRAYQQSRRARIWFPMFSFFECNVNGTVPNEYCWPFSKPAIMKRLIG.

This sequence belongs to the sphingomyelin synthase family.

The protein localises to the endoplasmic reticulum membrane. The catalysed reaction is an N-acylsphing-4-enine + a 1,2-diacyl-sn-glycero-3-phosphoethanolamine = an N-acylsphing-4-enine 1-phosphoethanolamine + a 1,2-diacyl-sn-glycerol. It carries out the reaction an N-acylsphinganine + a 1,2-diacyl-sn-glycero-3-phosphoethanolamine = an N-acylsphinganine-1-phosphoethanolamine + a 1,2-diacyl-sn-glycerol. It catalyses the reaction an N-acyl-(4R)-4-hydroxysphinganine + a 1,2-diacyl-sn-glycero-3-phosphoethanolamine = an N-acyl-(4R)-4-hydroxysphinganine-1-phosphoethanolamine + a 1,2-diacyl-sn-glycerol. The enzyme catalyses N-hexadecanoylsphinganine + a 1,2-diacyl-sn-glycero-3-phosphoethanolamine = N-hexadecanoyl-sphinganine-1-phosphoethanolamine + a 1,2-diacyl-sn-glycerol. The catalysed reaction is N-hexadecanoyl-(4R)-hydroxysphinganine + a 1,2-diacyl-sn-glycero-3-phosphoethanolamine = N-hexadecanoyl-(4R)-hydroxysphinganine-1-phosphoethanolamine + a 1,2-diacyl-sn-glycerol. It functions in the pathway sphingolipid metabolism. In terms of biological role, synthesizes sphingolipids through transfer of a phosphatidyl head group from a glycerophospholipid on to the primary hydroxyl of a ceramide in the lumen of the endoplasmic reticulum. Catalyzes the synthesis of ceramide phosphoethanolamines (CPEs) (such as N-acylsphing-4-enine 1-phosphoethanolamine) by transferring phosphoethanolamine head group, which is smaller and more hydrophilic than the phosphocholine (PC) headgroup transferred in the canonical sphingomyelin synthesis (SMS) reaction by SMS1 or SMS2, from a phosphatidylethanolamine (1,2-diacyl-sn-glycero-3-phosphoethanolamine, PE) to a ceramide (such as N-acylsphing-4-enine). The larger PC prevents an efficient fit in the enzyme's catalytic pocket, leading to little or no SMS activity. In vitro, in the absence of ceramide, it has PLC activity with preference for phosphatidylinositol and phosphatidic acid, but also hydrolyzes phosphatidylethanolamine. In Homo sapiens (Human), this protein is Sphingomyelin synthase-related protein 1.